A 1221-amino-acid chain; its full sequence is DNA topoisomerase 2 (1221 aa).

Residues Asn65, Asn94, 122-124, 135-142, and 352-354 each bind ATP; these read SSN, GRHGYGAK, and QNK. The Toprim domain maps to 432 to 546; the sequence is RTLIVTEGDS…SLLVRNPGFI (115 aa). Residues Glu438, Asp515, and Asp517 each contribute to the Mg(2+) site. One can recognise a Topo IIA-type catalytic domain in the interval 681 to 1097; that stretch reads LAHSVDGLKP…TPVQLWLGEL (417 aa). Tyr771 (O-(5'-phospho-DNA)-tyrosine intermediate) is an active-site residue. The interval 952 to 961 is interaction with DNA; that stretch reads GLTQRIHING. The disordered stretch occupies residues 1158–1198; that stretch reads VPPPTKRGAGGRSDGDGGATAAGAAAAVGGRGEKKGPGRAG. The span at 1165-1177 shows a compositional bias: gly residues; the sequence is GAGGRSDGDGGAT.

This sequence belongs to the type II topoisomerase family. Homodimer. Mg(2+) is required as a cofactor. The cofactor is Mn(2+). Ca(2+) serves as cofactor.

The protein localises to the nucleus. It catalyses the reaction ATP-dependent breakage, passage and rejoining of double-stranded DNA.. Its function is as follows. Control of topological states of DNA by transient breakage and subsequent rejoining of DNA strands. Topoisomerase II makes double-strand breaks. The protein is DNA topoisomerase 2 (TOP2) of Trypanosoma brucei brucei.